The primary structure comprises 313 residues: Olfactory receptor 4Q3 (313 aa).

The Extracellular segment spans residues 1-25 (MKKEQDSNVTEFVLLGLSSSWELQL). N-linked (GlcNAc...) asparagine glycosylation is present at Asn8. A helical membrane pass occupies residues 26-49 (FLFLLFLFFYIAIVLGNLLIVVTV). Topologically, residues 50 to 58 (QAHAHLLQS) are cytoplasmic. Residues 59–80 (PMYYFLGHLSFIDLCLSCVTVP) traverse the membrane as a helical segment. The Extracellular portion of the chain corresponds to 81–101 (KMLGDFLQQGKSISFSGCLAQ). Cys98 and Cys190 are oxidised to a cystine. The helical transmembrane segment at 102 to 121 (IYFLHFLGASEMFLLTVMAY) threads the bilayer. The Cytoplasmic segment spans residues 122-140 (DRYVAICNPLRYLTVMNPQ). A helical membrane pass occupies residues 141–159 (LCLWLVLACWCGGFIHSIM). The Extracellular segment spans residues 160–196 (QVILVIQLPFCGPNELDNFYCDVPQVIKLACMDTYVV). A helical membrane pass occupies residues 197–220 (EVLVIANSGLLSLVCFLVLLFSYA). Residues 221-236 (IILITLRTHFCQGQNK) lie on the Cytoplasmic side of the membrane. A helical membrane pass occupies residues 237 to 259 (VFSTCASHLTVVSLIFVPCVFIY). The Extracellular segment spans residues 260–270 (LRPFCSFSVDK). The helical transmembrane segment at 271–290 (IFSLFYTVITPMLNPLIYTL) threads the bilayer. Residues 291–313 (RNTDMKTAMKKLRIKPCGIPLPC) are Cytoplasmic-facing.

The protein belongs to the G-protein coupled receptor 1 family.

The protein localises to the cell membrane. In terms of biological role, odorant receptor. The chain is Olfactory receptor 4Q3 (OR4Q3) from Homo sapiens (Human).